Consider the following 1303-residue polypeptide: Endoplasmic reticulum transmembrane helix translocase spfA (1303 aa).

Helical transmembrane passes span 25-45 (LHAY…VYLS) and 57-77 (EWTF…WLMT). The tract at residues 158 to 191 (KPPVKVFQQAQGLTSKEEIDRIQHHYGDNTFDIP) is A-domain; part 1. The next 2 helical transmembrane spans lie at 201–221 (EHAV…WMLD) and 223–243 (YWYY…TVVW). The segment at 256-408 (NIKPYDVWVY…LVRTMIYSTE (153 aa)) is A-domain; part 2. N-linked (GlcNAc...) asparagine glycosylation occurs at Asn287. Residues 415 to 435 (VEALLFILFLLIFAIAAAWYV) form a helical membrane-spanning segment. Asn474 carries N-linked (GlcNAc...) asparagine glycosylation. Residues 484 to 513 (AIFCTEPFRIPFAGRVDVACFDKTGTLTGE) are P-domain; part 1. Residue Asp505 is the 4-aspartylphosphate intermediate of the active site. The Mg(2+) site is built by Asp505 and Thr507. Residue 505–507 (DKT) coordinates ATP. Positions 515-721 (LVVDGIAGLT…FAGFLVLQCP (207 aa)) are N-domain. N-linked (GlcNAc...) asparagine glycosylation occurs at Asn589. Phe616 and Arg678 together coordinate ATP. Positions 724 to 883 (EDAIKAVRML…HVGVALLNGS (160 aa)) are P-domain; part 2. N-linked (GlcNAc...) asparagine glycosylation is present at Asn734. Residues Asp746 and 862–866 (DGTND) each bind ATP. Asp862 provides a ligand contact to Mg(2+). Residues 884–1019 (PEDLAKIAEH…ELDDSEPPTI (136 aa)) form an arm-like region. Asn958 carries an N-linked (GlcNAc...) asparagine glycan. Residues 1020 to 1035 (KLGDASVAAPFTSKLA) form a P-domain; part 3 region. The next 5 helical transmembrane spans lie at 1060–1080 (ILAL…LDGI), 1082–1102 (FGDG…LSIS), 1122–1142 (VYII…LIYL), 1201–1221 (AMYW…TEFI), and 1239–1259 (VTLT…ENVL). A disordered region spans residues 1277–1303 (DQLQREMERKKQEELETQAEKERQRKV).

Belongs to the cation transport ATPase (P-type) (TC 3.A.3) family. Type V subfamily. Mg(2+) is required as a cofactor.

It localises to the endoplasmic reticulum membrane. It catalyses the reaction [protein]-with a C-terminal TM segment(out) + ATP + H2O = [protein]-with a C-terminal TM segment(in) + ADP + phosphate + H(+). The ATPase activity is stimulated by phosphatidylinositol 4-phosphate (PI4P). Functionally, endoplasmic reticulum (ER) translocase required to remove mitochondrial transmembrane proteins mistargeted to the endoplasmic reticulum. Acts as a dislocase that mediates the ATP-dependent extraction of mislocalized mitochondrial transmembrane proteins from the endoplasmic reticulum membrane. Works in concert with the ER Ca(2+) pump srcA to support ER homeostasis. With srcA, also supports redox homeostasis and virulence. This chain is Endoplasmic reticulum transmembrane helix translocase spfA, found in Aspergillus fumigatus (strain ATCC MYA-4609 / CBS 101355 / FGSC A1100 / Af293) (Neosartorya fumigata).